Consider the following 195-residue polypeptide: Ephrin-A2 (195 aa).

Residues 1-16 form the signal peptide; the sequence is MELSLVVFTVVCWVSV. The Ephrin RBD domain occupies 24–157; sequence SDRHAVYWNS…KLKVYVKPTS (134 aa). Asn32 carries an N-linked (GlcNAc...) asparagine glycan. 2 disulfide bridges follow: Cys57/Cys97 and Cys85/Cys146. Cys174 carries GPI-anchor amidated cysteine lipidation. The propeptide at 175–195 is removed in mature form; sequence GADGPCLAVLMLLLVFLLAGV.

Belongs to the ephrin family. As to quaternary structure, binds to the receptor tyrosine kinases epha2, epha3, epha4 and epha5. Interacts with epha8; activates epha8. Widespread expression in the embryo.

The protein resides in the cell membrane. Its function is as follows. Cell surface GPI-bound ligand for Eph receptors, a family of receptor tyrosine kinases which are crucial for migration, repulsion and adhesion during neuronal, vascular and epithelial development. Binds promiscuously Eph receptors residing on adjacent cells, leading to contact-dependent bidirectional signaling into neighboring cells. The signaling pathway downstream of the receptor is referred to as forward signaling while the signaling pathway downstream of the ephrin ligand is referred to as reverse signaling. With the epha2 receptor may play a role in bone remodeling through regulation of osteoclastogenesis and osteoblastogenesis. The chain is Ephrin-A2 (efna2) from Danio rerio (Zebrafish).